A 159-amino-acid chain; its full sequence is Ribosomal RNA large subunit methyltransferase H (159 aa).

S-adenosyl-L-methionine is bound by residues L76, G108, and 127-132 (FGLLTL).

It belongs to the RNA methyltransferase RlmH family. In terms of assembly, homodimer.

It is found in the cytoplasm. The catalysed reaction is pseudouridine(1915) in 23S rRNA + S-adenosyl-L-methionine = N(3)-methylpseudouridine(1915) in 23S rRNA + S-adenosyl-L-homocysteine + H(+). Its function is as follows. Specifically methylates the pseudouridine at position 1915 (m3Psi1915) in 23S rRNA. This Leuconostoc citreum (strain KM20) protein is Ribosomal RNA large subunit methyltransferase H.